A 272-amino-acid polypeptide reads, in one-letter code: Octanoyltransferase (272 aa).

Polar residues predominate over residues 1 to 12; that stretch reads MQQDPPTSQPHT. The tract at residues 1 to 20 is disordered; that stretch reads MQQDPPTSQPHTPQIVDGVK. The 191-residue stretch at 65–255 folds into the BPL/LPL catalytic domain; sequence HQRPNTVIYV…EMMSFQPYEM (191 aa). Substrate-binding positions include 103–110, 175–177, and 188–190; these read RGGEITWH, AIG, and GFA. Cysteine 206 acts as the Acyl-thioester intermediate in catalysis.

This sequence belongs to the LipB family.

It localises to the cytoplasm. The enzyme catalyses octanoyl-[ACP] + L-lysyl-[protein] = N(6)-octanoyl-L-lysyl-[protein] + holo-[ACP] + H(+). The protein operates within protein modification; protein lipoylation via endogenous pathway; protein N(6)-(lipoyl)lysine from octanoyl-[acyl-carrier-protein]: step 1/2. Catalyzes the transfer of endogenously produced octanoic acid from octanoyl-acyl-carrier-protein onto the lipoyl domains of lipoate-dependent enzymes. Lipoyl-ACP can also act as a substrate although octanoyl-ACP is likely to be the physiological substrate. In Cutibacterium acnes (strain DSM 16379 / KPA171202) (Propionibacterium acnes), this protein is Octanoyltransferase.